A 211-amino-acid chain; its full sequence is MAVPEETEKKARDVNEKTALLKKKSATELGELATSINTIARDAHMEANLEMEIVPQGLRVLIKDDQNRNMFERGSAKIMPFFKTLLVELAPVFDSLDNKIIITGHTDAMAYKNNIYNNWNLSGDRALSARRVLEEAGMPEDKVMQVSAMADQMLLDSKNPQSAGNRRIEIMVLTKSASDTLYQYFGQHGDKVVQPLVQKLDKQQVLSQRTR.

One can recognise an OmpA-like domain in the interval Leu58 to Ser176.

Belongs to the MotB family.

The protein is Putative truncated flagellar export/assembly protein LafU of Escherichia coli (strain K12).